Consider the following 482-residue polypeptide: Phenylalanine--tRNA ligase alpha subunit (482 aa).

L-phenylalanine is bound by residues T327, 366–368 (QIE), and Y406. E408 contributes to the Mg(2+) binding site. F430 contributes to the L-phenylalanine binding site.

This sequence belongs to the class-II aminoacyl-tRNA synthetase family. Phe-tRNA synthetase alpha subunit type 2 subfamily. As to quaternary structure, tetramer of two alpha and two beta subunits. Requires Mg(2+) as cofactor.

Its subcellular location is the cytoplasm. The catalysed reaction is tRNA(Phe) + L-phenylalanine + ATP = L-phenylalanyl-tRNA(Phe) + AMP + diphosphate + H(+). The protein is Phenylalanine--tRNA ligase alpha subunit of Thermoplasma volcanium (strain ATCC 51530 / DSM 4299 / JCM 9571 / NBRC 15438 / GSS1).